The primary structure comprises 208 residues: Small ribosomal subunit protein uS4 (208 aa).

The S4 RNA-binding domain occupies Arg95–Asn157.

This sequence belongs to the universal ribosomal protein uS4 family. Part of the 30S ribosomal subunit. Contacts protein S5. The interaction surface between S4 and S5 is involved in control of translational fidelity.

In terms of biological role, one of the primary rRNA binding proteins, it binds directly to 16S rRNA where it nucleates assembly of the body of the 30S subunit. With S5 and S12 plays an important role in translational accuracy. The sequence is that of Small ribosomal subunit protein uS4 from Borrelia hermsii (strain HS1 / DAH).